Reading from the N-terminus, the 294-residue chain is Acetylglutamate kinase (294 aa).

Substrate-binding positions include 60 to 61 (GG), arginine 82, and asparagine 186.

This sequence belongs to the acetylglutamate kinase family. ArgB subfamily.

It is found in the cytoplasm. It catalyses the reaction N-acetyl-L-glutamate + ATP = N-acetyl-L-glutamyl 5-phosphate + ADP. Its pathway is amino-acid biosynthesis; L-arginine biosynthesis; N(2)-acetyl-L-ornithine from L-glutamate: step 2/4. Its function is as follows. Catalyzes the ATP-dependent phosphorylation of N-acetyl-L-glutamate. This Methanospirillum hungatei JF-1 (strain ATCC 27890 / DSM 864 / NBRC 100397 / JF-1) protein is Acetylglutamate kinase.